The chain runs to 429 residues: Adenylosuccinate synthetase (429 aa).

Residues 12–18 and 40–42 each bind GTP; these read GDEGKGK and GHT. Asp13 (proton acceptor) is an active-site residue. Mg(2+) is bound by residues Asp13 and Gly40. Residues 13 to 16, 38 to 41, Thr129, Arg143, Gln223, Thr238, and Arg302 contribute to the IMP site; these read DEGK and NAGH. Catalysis depends on His41, which acts as the Proton donor. 298 to 304 contributes to the substrate binding site; that stretch reads VVTGRKR. Residues Arg304, 330–332, and 412–414 each bind GTP; these read KLD and STS.

It belongs to the adenylosuccinate synthetase family. In terms of assembly, homodimer. Mg(2+) is required as a cofactor.

It is found in the cytoplasm. It carries out the reaction IMP + L-aspartate + GTP = N(6)-(1,2-dicarboxyethyl)-AMP + GDP + phosphate + 2 H(+). Its pathway is purine metabolism; AMP biosynthesis via de novo pathway; AMP from IMP: step 1/2. Plays an important role in the de novo pathway of purine nucleotide biosynthesis. Catalyzes the first committed step in the biosynthesis of AMP from IMP. In Brucella anthropi (strain ATCC 49188 / DSM 6882 / CCUG 24695 / JCM 21032 / LMG 3331 / NBRC 15819 / NCTC 12168 / Alc 37) (Ochrobactrum anthropi), this protein is Adenylosuccinate synthetase.